The primary structure comprises 479 residues: GTPase Obg (479 aa).

Residues 2–159 form the Obg domain; sequence PRFVDRVVIH…RDLTLELKTV (158 aa). The OBG-type G domain occupies 160–340; that stretch reads ADVGLVGFPS…LIFGLSQMIS (181 aa). Residues 166–173, 191–195, 212–215, 292–295, and 321–323 each bind GTP; these read GFPSAGKS, FTTLV, DVPG, NKID, and STA. Mg(2+)-binding residues include Ser-173 and Thr-193. One can recognise an OCT domain in the interval 358–436; that stretch reads PIPVDDSGFT…IGEMTFDWEP (79 aa). The disordered stretch occupies residues 434 to 479; the sequence is WEPQTPAGEPVAMSGRGTDPRLDSNKRVGAAERKAARSRRREHGDG. The segment covering 451–468 has biased composition (basic and acidic residues); the sequence is TDPRLDSNKRVGAAERKA. The span at 469-479 shows a compositional bias: basic residues; that stretch reads ARSRRREHGDG.

The protein belongs to the TRAFAC class OBG-HflX-like GTPase superfamily. OBG GTPase family. Monomer. Mg(2+) serves as cofactor.

The protein localises to the cytoplasm. Its function is as follows. An essential GTPase which binds GTP, GDP and possibly (p)ppGpp with moderate affinity, with high nucleotide exchange rates and a fairly low GTP hydrolysis rate. Plays a role in control of the cell cycle, stress response, ribosome biogenesis and in those bacteria that undergo differentiation, in morphogenesis control. The chain is GTPase Obg from Mycobacterium tuberculosis (strain ATCC 25177 / H37Ra).